Reading from the N-terminus, the 448-residue chain is UDP-N-acetylmuramoylalanine--D-glutamate ligase (448 aa).

ATP is bound at residue G116–T122.

It belongs to the MurCDEF family.

It is found in the cytoplasm. It catalyses the reaction UDP-N-acetyl-alpha-D-muramoyl-L-alanine + D-glutamate + ATP = UDP-N-acetyl-alpha-D-muramoyl-L-alanyl-D-glutamate + ADP + phosphate + H(+). It participates in cell wall biogenesis; peptidoglycan biosynthesis. Functionally, cell wall formation. Catalyzes the addition of glutamate to the nucleotide precursor UDP-N-acetylmuramoyl-L-alanine (UMA). This is UDP-N-acetylmuramoylalanine--D-glutamate ligase from Pseudomonas fluorescens (strain ATCC BAA-477 / NRRL B-23932 / Pf-5).